Here is a 216-residue protein sequence, read N- to C-terminus: Fibroblast growth factor 17 (216 aa).

Positions Met-1–Gln-22 are cleaved as a signal peptide. A glycan (N-linked (GlcNAc...) asparagine) is linked at Asn-137. The disordered stretch occupies residues Phe-195–Thr-216. Positions Arg-204 to Thr-216 are enriched in basic residues.

It belongs to the heparin-binding growth factors family. In terms of assembly, interacts with FGFR3 and FGFR4.

It is found in the secreted. Plays an important role in the regulation of embryonic development and as signaling molecule in the induction and patterning of the embryonic brain. Required for normal brain development. The polypeptide is Fibroblast growth factor 17 (Fgf17) (Mus musculus (Mouse)).